Reading from the N-terminus, the 318-residue chain is Acetyl-coenzyme A carboxylase carboxyl transferase subunit alpha (318 aa).

The CoA carboxyltransferase C-terminal domain maps to 38–292 (KLEKRLAKLE…NKTITKSLHA (255 aa)).

Belongs to the AccA family. In terms of assembly, acetyl-CoA carboxylase is a heterohexamer composed of biotin carboxyl carrier protein (AccB), biotin carboxylase (AccC) and two subunits each of ACCase subunit alpha (AccA) and ACCase subunit beta (AccD).

The protein resides in the cytoplasm. The enzyme catalyses N(6)-carboxybiotinyl-L-lysyl-[protein] + acetyl-CoA = N(6)-biotinyl-L-lysyl-[protein] + malonyl-CoA. It participates in lipid metabolism; malonyl-CoA biosynthesis; malonyl-CoA from acetyl-CoA: step 1/1. Functionally, component of the acetyl coenzyme A carboxylase (ACC) complex. First, biotin carboxylase catalyzes the carboxylation of biotin on its carrier protein (BCCP) and then the CO(2) group is transferred by the carboxyltransferase to acetyl-CoA to form malonyl-CoA. This Listeria welshimeri serovar 6b (strain ATCC 35897 / DSM 20650 / CCUG 15529 / CIP 8149 / NCTC 11857 / SLCC 5334 / V8) protein is Acetyl-coenzyme A carboxylase carboxyl transferase subunit alpha.